The following is a 425-amino-acid chain: 2-methylserine hydroxymethyltransferase (425 aa).

(6S)-5,6,7,8-tetrahydrofolate is bound by residues L126 and G130–L132. An N6-(pyridoxal phosphate)lysine modification is found at K235.

Belongs to the SHMT family. In terms of assembly, homodimer. Pyridoxal 5'-phosphate serves as cofactor.

Its subcellular location is the cytoplasm. It carries out the reaction (6R)-5,10-methylene-5,6,7,8-tetrahydrofolate + D-alanine + H2O = 2-methylserine + (6S)-5,6,7,8-tetrahydrofolate. It functions in the pathway one-carbon metabolism; tetrahydrofolate interconversion. Its function is as follows. Catalyzes the reversible interconversion of alpha-methyl-L-serine to D-alanine with tetrahydrofolate (THF) serving as the one-carbon carrier. Cannot use alpha-methyl-D-serine, L-serine, D-serine or L-alanine. This chain is 2-methylserine hydroxymethyltransferase, found in Aminobacter sp.